A 1369-amino-acid polypeptide reads, in one-letter code: Xanthine dehydrogenase (1369 aa).

Residues G20 to I106 enclose the 2Fe-2S ferredoxin-type domain. Residues C58, C63, C66, C88, C128, C131, C164, and C166 each coordinate [2Fe-2S] cluster. An FAD-binding PCMH-type domain is found at N265–P450. FAD-binding positions include L293–V300, F373, S383–N387, D396, L440, and K458. 2 residues coordinate Mo-molybdopterin: Q804 and F835. Residues E839 and R917 each coordinate substrate. Mo-molybdopterin is bound at residue R949. 2 residues coordinate substrate: F951 and T1047. Mo-molybdopterin is bound at residue A1116. E1305 acts as the Proton acceptor in catalysis.

The protein belongs to the xanthine dehydrogenase family. Homodimer. Requires [2Fe-2S] cluster as cofactor. FAD is required as a cofactor. Mo-molybdopterin serves as cofactor.

It catalyses the reaction xanthine + NAD(+) + H2O = urate + NADH + H(+). The catalysed reaction is hypoxanthine + NAD(+) + H2O = xanthine + NADH + H(+). Its function is as follows. Key enzyme involved in purine catabolism. Catalyzes the oxidation of hypoxanthine to xanthine and the oxidation of xanthine to urate. This chain is Xanthine dehydrogenase (XDH), found in Oryza sativa subsp. japonica (Rice).